The following is a 182-amino-acid chain: Large ribosomal subunit protein uL6 (182 aa).

It belongs to the universal ribosomal protein uL6 family. Part of the 50S ribosomal subunit.

Its function is as follows. This protein binds to the 23S rRNA, and is important in its secondary structure. It is located near the subunit interface in the base of the L7/L12 stalk, and near the tRNA binding site of the peptidyltransferase center. The protein is Large ribosomal subunit protein uL6 of Carboxydothermus hydrogenoformans (strain ATCC BAA-161 / DSM 6008 / Z-2901).